Reading from the N-terminus, the 315-residue chain is Methionyl-tRNA formyltransferase (315 aa).

112–115 (SLLP) contributes to the (6S)-5,6,7,8-tetrahydrofolate binding site.

This sequence belongs to the Fmt family.

It catalyses the reaction L-methionyl-tRNA(fMet) + (6R)-10-formyltetrahydrofolate = N-formyl-L-methionyl-tRNA(fMet) + (6S)-5,6,7,8-tetrahydrofolate + H(+). Its function is as follows. Attaches a formyl group to the free amino group of methionyl-tRNA(fMet). The formyl group appears to play a dual role in the initiator identity of N-formylmethionyl-tRNA by promoting its recognition by IF2 and preventing the misappropriation of this tRNA by the elongation apparatus. This chain is Methionyl-tRNA formyltransferase, found in Rhizobium rhizogenes (strain K84 / ATCC BAA-868) (Agrobacterium radiobacter).